The sequence spans 124 residues: NADH-quinone oxidoreductase subunit K (124 aa).

Transmembrane regions (helical) follow at residues M28–V48, F52–V72, and I84–L104.

It belongs to the complex I subunit 4L family. NDH-1 is composed of 14 different subunits. Subunits NuoA, H, J, K, L, M, N constitute the membrane sector of the complex.

It is found in the cell inner membrane. It carries out the reaction a quinone + NADH + 5 H(+)(in) = a quinol + NAD(+) + 4 H(+)(out). Functionally, NDH-1 shuttles electrons from NADH, via FMN and iron-sulfur (Fe-S) centers, to quinones in the respiratory chain. The immediate electron acceptor for the enzyme in this species is believed to be ubiquinone. Couples the redox reaction to proton translocation (for every two electrons transferred, four hydrogen ions are translocated across the cytoplasmic membrane), and thus conserves the redox energy in a proton gradient. The polypeptide is NADH-quinone oxidoreductase subunit K (Psychrobacter sp. (strain PRwf-1)).